The chain runs to 64 residues: Alpha-toxin Amm5 (64 aa).

Residues 2–64 (KDGYIIDDLN…VSIKEKGRCN (63 aa)) form the LCN-type CS-alpha/beta domain. 4 disulfide bridges follow: Cys12–Cys63, Cys16–Cys36, Cys22–Cys46, and Cys26–Cys48. Asparagine amide is present on Asn64.

Expressed by the venom gland.

The protein resides in the secreted. Its function is as follows. Alpha toxins bind voltage-independently at site-3 of sodium channels (Nav) and inhibit the inactivation of the activated channels, thereby blocking neuronal transmission. The protein is Alpha-toxin Amm5 of Androctonus mauritanicus mauritanicus (Scorpion).